Consider the following 96-residue polypeptide: UPF0213 protein Lreu_0682 (96 aa).

Residues E4 to K81 enclose the GIY-YIG domain.

This sequence belongs to the UPF0213 family.

This is UPF0213 protein Lreu_0682 from Limosilactobacillus reuteri (strain DSM 20016) (Lactobacillus reuteri).